A 193-amino-acid chain; its full sequence is Penicillin-binding protein activator LpoB (193 aa).

A signal peptide spans Met-1–Gly-16. Cys-17 carries the N-palmitoyl cysteine lipid modification. Cys-17 carries the S-diacylglycerol cysteine lipid modification. A disordered region spans residues Glu-24–Met-55. The span at Val-35 to Lys-54 shows a compositional bias: pro residues.

It belongs to the LpoB family. Interacts with PBP1b.

It is found in the cell outer membrane. Its function is as follows. Regulator of peptidoglycan synthesis that is essential for the function of penicillin-binding protein 1B (PBP1b). This is Penicillin-binding protein activator LpoB from Yersinia enterocolitica serotype O:8 / biotype 1B (strain NCTC 13174 / 8081).